A 423-amino-acid polypeptide reads, in one-letter code: Putative competence-damage inducible protein (423 aa).

The protein belongs to the CinA family.

The polypeptide is Putative competence-damage inducible protein (Streptococcus equi subsp. zooepidemicus (strain MGCS10565)).